The following is a 291-amino-acid chain: Glycolipid transfer protein domain-containing protein 2 (291 aa).

Residue asparagine 276 is glycosylated (N-linked (GlcNAc...) asparagine).

This sequence belongs to the GLTP family.

The protein is Glycolipid transfer protein domain-containing protein 2 (GLTPD2) of Homo sapiens (Human).